Consider the following 165-residue polypeptide: UPF0669 protein v1g209471 (165 aa).

A signal peptide spans 1 to 23 (MQGRYSAPLFLLLWLFFLHGTLC). N-linked (GlcNAc...) asparagine glycosylation is present at asparagine 38.

The protein belongs to the UPF0669 family.

Its subcellular location is the secreted. This is UPF0669 protein v1g209471 from Nematostella vectensis (Starlet sea anemone).